The primary structure comprises 118 residues: Fluoride-specific ion channel FluC 1 (118 aa).

4 consecutive transmembrane segments (helical) span residues 5–25, 34–54, 56–76, and 98–118; these read FVLVGFGAALGAMLRYGISVL, FPFATFFINITGSFLLGFLVS, ALGPVWQLFLGTGFMGGYTTF, and YLGCTYVFGLIAAFLGLMLGV. The Na(+) site is built by Gly71 and Thr74.

Belongs to the fluoride channel Fluc/FEX (TC 1.A.43) family.

The protein localises to the cell membrane. It carries out the reaction fluoride(in) = fluoride(out). Its activity is regulated as follows. Na(+) is not transported, but it plays an essential structural role and its presence is essential for fluoride channel function. Its function is as follows. Fluoride-specific ion channel. Important for reducing fluoride concentration in the cell, thus reducing its toxicity. In Listeria monocytogenes serotype 4b (strain F2365), this protein is Fluoride-specific ion channel FluC 1.